We begin with the raw amino-acid sequence, 238 residues long: 2-C-methyl-D-erythritol 4-phosphate cytidylyltransferase (238 aa).

It belongs to the IspD/TarI cytidylyltransferase family. IspD subfamily.

It carries out the reaction 2-C-methyl-D-erythritol 4-phosphate + CTP + H(+) = 4-CDP-2-C-methyl-D-erythritol + diphosphate. The protein operates within isoprenoid biosynthesis; isopentenyl diphosphate biosynthesis via DXP pathway; isopentenyl diphosphate from 1-deoxy-D-xylulose 5-phosphate: step 2/6. Catalyzes the formation of 4-diphosphocytidyl-2-C-methyl-D-erythritol from CTP and 2-C-methyl-D-erythritol 4-phosphate (MEP). The sequence is that of 2-C-methyl-D-erythritol 4-phosphate cytidylyltransferase from Acinetobacter baumannii (strain ACICU).